A 449-amino-acid chain; its full sequence is Phosphoglucosamine mutase (449 aa).

Serine 101 (phosphoserine intermediate) is an active-site residue. Serine 101, aspartate 242, aspartate 244, and aspartate 246 together coordinate Mg(2+). Serine 101 carries the post-translational modification Phosphoserine.

It belongs to the phosphohexose mutase family. The cofactor is Mg(2+). Post-translationally, activated by phosphorylation.

The catalysed reaction is alpha-D-glucosamine 1-phosphate = D-glucosamine 6-phosphate. Catalyzes the conversion of glucosamine-6-phosphate to glucosamine-1-phosphate. This Methylocella silvestris (strain DSM 15510 / CIP 108128 / LMG 27833 / NCIMB 13906 / BL2) protein is Phosphoglucosamine mutase.